A 107-amino-acid polypeptide reads, in one-letter code: UPF0122 protein MYPE4850 (107 aa).

This sequence belongs to the UPF0122 family.

In terms of biological role, might take part in the signal recognition particle (SRP) pathway. This is inferred from the conservation of its genetic proximity to ftsY/ffh. May be a regulatory protein. This Malacoplasma penetrans (strain HF-2) (Mycoplasma penetrans) protein is UPF0122 protein MYPE4850.